The sequence spans 396 residues: MSVGMGIDLEAFRKSQRADGFASILAIGTANPPNVVDQSTYPDYYFRVTNNEDNTDLKDKFKRICERSAIKKRHMYLTEEILKKNPELCAFLEVPSLDTRQAMLAAEVPRLGKEAAEKAIEEWGQPKSRITHLIFCTTTTPDLPGADFEVAKLLGLHPSVKRVGVFQHGCFAGGTVLRLAKDLAENNRGARVLVVCSENTAVTFRGPSETHLDGLVGLALFGDGASALIVGADPIPQVEKPCFEIVWTAQTVVPNSDGAISGKLREVGLTFQLKGAVPDLISTNIEKCLVEAFSQFNISDWNQLFWIAHPGGHAILDQVEASLNLDPTKLRATRHVMSEYGNMSSACVHFILDETRKASRQNGCSTSGGGFQMGVLFGFGPGLTVETVVLKSIPFP.

60–63 (KFKR) is a binding site for substrate. Residue Cys-170 is part of the active site. Substrate-binding positions include Leu-273 and 311-313 (GGH).

The protein belongs to the thiolase-like superfamily. Chalcone/stilbene synthases family. In terms of assembly, homodimer.

It localises to the cytoplasm. It catalyses the reaction (E)-cinnamoyl-CoA + 3 malonyl-CoA + 3 H(+) = (E)-pinosylvin + 4 CO2 + 4 CoA. The enzyme catalyses 3-phenylpropanoyl-CoA + 3 malonyl-CoA + 3 H(+) = dihydropinosylvin + 4 CO2 + 4 CoA. It participates in phytoalexin biosynthesis; pinosylvin biosynthesis. Catalyzes the production of pinosylvin from cinnamoyl-CoA and malonyl-CoA, and dihydropinosylvin from dihydrocinnamoyl-CoA. The polypeptide is Pinosylvin synthase 1 (Pinus strobus (Eastern white pine)).